Consider the following 461-residue polypeptide: Porin AaxA (461 aa).

The signal sequence occupies residues 1–22; the sequence is MSFRSVLLTALLSLSFTTTMQA.

It belongs to the OprB family.

The protein resides in the cell outer membrane. Its function is as follows. Facilitates L-arginine uptake, as part of the AaxABC system. The arginine uptake by the bacterium in the macrophage may be a virulence factor against the host innate immune response. This is Porin AaxA (aaxA) from Chlamydia trachomatis serovar A (strain ATCC VR-571B / DSM 19440 / HAR-13).